A 276-amino-acid polypeptide reads, in one-letter code: Putative translation initiation factor eIF-2B subunit 2-like (276 aa).

The protein belongs to the eIF-2B alpha/beta/delta subunits family. In terms of assembly, complex of two different subunits.

In terms of biological role, catalyzes the exchange of initiation factor 2-bound GDP for GTP. This chain is Putative translation initiation factor eIF-2B subunit 2-like, found in Pyrococcus furiosus (strain ATCC 43587 / DSM 3638 / JCM 8422 / Vc1).